Consider the following 409-residue polypeptide: Transcription termination factor 3, mitochondrial (409 aa).

Residues 1–64 constitute a mitochondrion transit peptide; sequence MALLAQQLSR…KTDRALFSWS (64 aa). The tract at residues 74–93 is disordered; that stretch reads RKSSTNSTLLPSVSEQPEKI.

This sequence belongs to the mTERF family.

Its subcellular location is the mitochondrion. In terms of biological role, binds promoter DNA and regulates initiation of transcription. Required for normal mitochondrial transcription and translation, and for normal assembly of mitochondrial respiratory complexes. Required for normal mitochondrial function. Maintains 16S rRNA levels and functions in mitochondrial ribosome assembly by regulating the biogenesis of the 39S ribosomal subunit. This is Transcription termination factor 3, mitochondrial (Mterf3) from Rattus norvegicus (Rat).